A 404-amino-acid polypeptide reads, in one-letter code: 4-hydroxy-3-methylbut-2-en-1-yl diphosphate synthase (flavodoxin) (404 aa).

[4Fe-4S] cluster contacts are provided by Cys-310, Cys-313, Cys-345, and Glu-352.

Belongs to the IspG family. It depends on [4Fe-4S] cluster as a cofactor.

It carries out the reaction (2E)-4-hydroxy-3-methylbut-2-enyl diphosphate + oxidized [flavodoxin] + H2O + 2 H(+) = 2-C-methyl-D-erythritol 2,4-cyclic diphosphate + reduced [flavodoxin]. Its pathway is isoprenoid biosynthesis; isopentenyl diphosphate biosynthesis via DXP pathway; isopentenyl diphosphate from 1-deoxy-D-xylulose 5-phosphate: step 5/6. Functionally, converts 2C-methyl-D-erythritol 2,4-cyclodiphosphate (ME-2,4cPP) into 1-hydroxy-2-methyl-2-(E)-butenyl 4-diphosphate. This chain is 4-hydroxy-3-methylbut-2-en-1-yl diphosphate synthase (flavodoxin), found in Treponema pallidum (strain Nichols).